Consider the following 373-residue polypeptide: Glutamate 5-kinase (373 aa).

An ATP-binding site is contributed by Lys-15. Substrate is bound by residues Ser-56, Asp-143, and Asn-155. 175–176 (SD) lines the ATP pocket. The 78-residue stretch at 281 to 358 (KGTLTIDAGA…PDVMTILGIS (78 aa)) folds into the PUA domain.

This sequence belongs to the glutamate 5-kinase family.

The protein localises to the cytoplasm. The enzyme catalyses L-glutamate + ATP = L-glutamyl 5-phosphate + ADP. It participates in amino-acid biosynthesis; L-proline biosynthesis; L-glutamate 5-semialdehyde from L-glutamate: step 1/2. Functionally, catalyzes the transfer of a phosphate group to glutamate to form L-glutamate 5-phosphate. This Bradyrhizobium diazoefficiens (strain JCM 10833 / BCRC 13528 / IAM 13628 / NBRC 14792 / USDA 110) protein is Glutamate 5-kinase.